A 145-amino-acid chain; its full sequence is uncharacterized protein (145 aa).

The segment at 86-110 adopts a dksA C4-type zinc-finger fold; it reads CERCGEEIPEPRLCAIPWTRYCAKC.

This is an uncharacterized protein from Aquifex aeolicus (strain VF5).